Consider the following 460-residue polypeptide: A-type ATP synthase subunit B (460 aa).

Belongs to the ATPase alpha/beta chains family. In terms of assembly, has multiple subunits with at least A(3), B(3), C, D, E, F, H, I and proteolipid K(x).

The protein resides in the cell membrane. Component of the A-type ATP synthase that produces ATP from ADP in the presence of a proton gradient across the membrane. The B chain is a regulatory subunit. In Thermofilum pendens (strain DSM 2475 / Hrk 5), this protein is A-type ATP synthase subunit B.